The following is a 117-amino-acid chain: MIKGIGIDAVELSRIKPIVEKQGSFIQRVLTPNELTLFEKLSTKRQIEFLAGRFACKEAFSKAWGTGIGKVGLQDIEVLTEKTGAPYVANSPHNGKVFVSITHTETMAIAQIVLESE.

Mg(2+) is bound by residues Asp-8 and Glu-58.

The protein belongs to the P-Pant transferase superfamily. AcpS family. It depends on Mg(2+) as a cofactor.

It localises to the cytoplasm. The enzyme catalyses apo-[ACP] + CoA = holo-[ACP] + adenosine 3',5'-bisphosphate + H(+). In terms of biological role, transfers the 4'-phosphopantetheine moiety from coenzyme A to a Ser of acyl-carrier-protein. This is Holo-[acyl-carrier-protein] synthase from Enterococcus faecalis (strain ATCC 700802 / V583).